Here is a 474-residue protein sequence, read N- to C-terminus: 6-phospho-beta-galactosidase (474 aa).

D-galactose 6-phosphate contacts are provided by glutamine 19, histidine 116, asparagine 159, glutamate 160, and asparagine 297. Glutamate 160 (proton donor) is an active-site residue. The Nucleophile role is filled by glutamate 375. 4 residues coordinate D-galactose 6-phosphate: serine 433, tryptophan 434, lysine 440, and tyrosine 442.

It belongs to the glycosyl hydrolase 1 family.

It catalyses the reaction a 6-phospho-beta-D-galactoside + H2O = D-galactose 6-phosphate + an alcohol. It functions in the pathway carbohydrate metabolism; lactose degradation; D-galactose 6-phosphate and beta-D-glucose from lactose 6-phosphate: step 1/1. The polypeptide is 6-phospho-beta-galactosidase (Lacticaseibacillus rhamnosus (Lactobacillus rhamnosus)).